Consider the following 289-residue polypeptide: Acetyl-coenzyme A carboxylase carboxyl transferase subunit beta (289 aa).

One can recognise a CoA carboxyltransferase N-terminal domain in the interval 34–289; that stretch reads MWVKCNKCGE…KLINMHKNSF (256 aa). C38, C41, C57, and C60 together coordinate Zn(2+). The segment at 38–60 adopts a C4-type zinc-finger fold; the sequence is CNKCGEILYQNDLEKNYMACNLC.

This sequence belongs to the AccD/PCCB family. In terms of assembly, acetyl-CoA carboxylase is a heterohexamer composed of biotin carboxyl carrier protein (AccB), biotin carboxylase (AccC) and two subunits each of ACCase subunit alpha (AccA) and ACCase subunit beta (AccD). The cofactor is Zn(2+).

It localises to the cytoplasm. The enzyme catalyses N(6)-carboxybiotinyl-L-lysyl-[protein] + acetyl-CoA = N(6)-biotinyl-L-lysyl-[protein] + malonyl-CoA. Its pathway is lipid metabolism; malonyl-CoA biosynthesis; malonyl-CoA from acetyl-CoA: step 1/1. Its function is as follows. Component of the acetyl coenzyme A carboxylase (ACC) complex. Biotin carboxylase (BC) catalyzes the carboxylation of biotin on its carrier protein (BCCP) and then the CO(2) group is transferred by the transcarboxylase to acetyl-CoA to form malonyl-CoA. The chain is Acetyl-coenzyme A carboxylase carboxyl transferase subunit beta from Clostridium botulinum (strain Loch Maree / Type A3).